A 607-amino-acid polypeptide reads, in one-letter code: Inactive metallocarboxypeptidase ECM14 (607 aa).

The first 21 residues, 1–21, serve as a signal peptide directing secretion; sequence MRLFTHGQVLALLAFVNTISA. Residues 22–174 constitute a propeptide that is removed on maturation; sequence IPSFSTNSYP…QTIYESYPSP (153 aa). A Peptidase M14 domain is found at 202 to 522; sequence NYQPLSVIVP…NAVMMLGRFL (321 aa). The Zn(2+) site is built by histidine 264 and glutamate 267. Residues 264 to 267, arginine 322, and 339 to 340 contribute to the substrate site; these read HARE and DR. A disulfide bridge links cysteine 333 with cysteine 356. A glycan (N-linked (GlcNAc...) asparagine) is linked at asparagine 349. A Zn(2+)-binding site is contributed by histidine 396. Position 397–398 (397–398) interacts with substrate; the sequence is SY. Residues 539-607 are disordered; the sequence is QRPNKDDKPI…GWGFRRLRKR (69 aa). Residues 550-571 show a composition bias toward acidic residues; that stretch reads NDDDDDDNDDDDDDDDDADTND. The segment covering 573–590 has biased composition (basic and acidic residues); the sequence is GIGRKDDSWVPDEYKGDN.

This sequence belongs to the peptidase M14 family. Zn(2+) serves as cofactor.

The protein localises to the vacuole. It localises to the secreted. Its function is as follows. Inactive carboxypeptidase that may play a role in cell wall organization and biogenesis. This is Inactive metallocarboxypeptidase ECM14 (ECM14) from Ajellomyces capsulatus (strain NAm1 / WU24) (Darling's disease fungus).